The primary structure comprises 195 residues: Protein LIGHT-DEPENDENT SHORT HYPOCOTYLS 7 (195 aa).

2 disordered regions span residues 1–41 (MASH…LSRY) and 154–195 (SQAK…NLAS). A compositionally biased stretch (pro residues) spans 21–36 (QPQPQPHQPQSPPNPP). The ALOG domain occupies 40–167 (RYESQKRRDW…ARGVPYKKRK (128 aa)). Basic residues predominate over residues 162–175 (PYKKRKKRKKRNPM). The short motif at 165–169 (KRKKR) is the Nuclear localization signal element. Low complexity predominate over residues 184 to 195 (TTGTSSSSNLAS).

This sequence belongs to the plant homeotic and developmental regulators ALOG protein family.

It is found in the nucleus. In terms of biological role, probable transcription regulator that acts as a developmental regulator by promoting cell growth in response to light. In Arabidopsis thaliana (Mouse-ear cress), this protein is Protein LIGHT-DEPENDENT SHORT HYPOCOTYLS 7 (LSH7).